The primary structure comprises 329 residues: Trem-like transcript 2 protein (329 aa).

Positions 1–24 (MEPWPLTFLLLLLLLLWLQGCVSG) are cleaved as a signal peptide. The Ig-like V-type domain occupies 25–126 (HSNENLYRKV…HFYPLVGFQL (102 aa)). At 25 to 270 (HSNENLYRKV…NRSQETYIPA (246 aa)) the chain is on the extracellular side. Intrachain disulfides connect cysteine 46–cysteine 110 and cysteine 61–cysteine 68. The tract at residues 202–259 (FIDTSGTVTEPERNTESQPATLSPSNARSFSADPVTTSTMSRHQSSSLSTTGTCHPLT) is disordered. Residues 217-259 (ESQPATLSPSNARSFSADPVTTSTMSRHQSSSLSTTGTCHPLT) are compositionally biased toward polar residues. Asparagine 261 is a glycosylation site (N-linked (GlcNAc...) asparagine). Residues 271 to 291 (MVVVLTFLPAPVVLVVAYGFW) form a helical membrane-spanning segment. The Cytoplasmic segment spans residues 292–329 (KKRHMGRYNLGSNYAKPWIHLPEGPETPWKPAWSKITQ).

As to quaternary structure, interacts with CD276 and this interaction enhances T-cell activation. Detected in B-lymphocytes and macrophages. Detected in spleen, lymph nodes, blood, bone marrow and cells from the peritoneal cavity (at protein level).

Its subcellular location is the cell membrane. Its function is as follows. Cell surface receptor that may play a role in the innate and adaptive immune response. Acts as a counter-receptor for CD276 and interaction with CD276 on T-cells enhances T-cell activation. In Mus musculus (Mouse), this protein is Trem-like transcript 2 protein (Treml2).